Reading from the N-terminus, the 235-residue chain is Hydroxyacylglutathione hydrolase (235 aa).

Residues His53, His55, Asp57, His58, His109, Asp127, and His165 each contribute to the Zn(2+) site.

This sequence belongs to the metallo-beta-lactamase superfamily. Glyoxalase II family. Monomer. Requires Zn(2+) as cofactor.

It catalyses the reaction an S-(2-hydroxyacyl)glutathione + H2O = a 2-hydroxy carboxylate + glutathione + H(+). It participates in secondary metabolite metabolism; methylglyoxal degradation; (R)-lactate from methylglyoxal: step 2/2. Its function is as follows. Thiolesterase that catalyzes the hydrolysis of S-D-lactoyl-glutathione to form glutathione and D-lactic acid. The polypeptide is Hydroxyacylglutathione hydrolase (Glaesserella parasuis serovar 5 (strain SH0165) (Haemophilus parasuis)).